Consider the following 469-residue polypeptide: MNKLSGGGGRRTRVEGGQLGGEEWTRHGSFVNKPTRGWLHPNDKVMGPGVSYLVRYMGCVEVLQSMRALDFNTRTQVTREAISLVCEAVPGAKGAMRRRKPCSRPLSSILGRSNLKFAGMPITLTVSTSSLNLMAADCKQIIANHHMQSISFASGGDPDTAEYVAYVAKDPVNQRACHILECPEGLAQDVISTIGQAFELRFKQYLRNPPKLVTPHDRMAGFDGSAWDEEEEELPDHQYYNDFPGKEPPLGGVVDMRLREGAARPTLPSTQMPSHLGATLPIGQHVTGDHEVRKQMLPPPPCPGRELFDDPSYVNIQNLDKARQAGGGAGPPNPSVNGSAPRDLFDMKPFEDALRVPPAPQSMSMAEQLQGESWFHGKLSRREAEALLQLNGDFLVRESTTTPGQYVLTGLQSGQPKHLLLVDPEGVVRTKDHRFESVSHLISYHMDNHLPIISAGSELCLQQPVDRKV.

The tract at residues 1-26 (MNKLSGGGGRRTRVEGGQLGGEEWTR) is disordered. At serine 29 the chain carries Phosphoserine. Lysine 44 carries the post-translational modification N6-acetyllysine. Positions 46-229 (MGPGVSYLVR…AGFDGSAWDE (184 aa)) constitute a PID domain. The tract at residues 230–373 (EEEELPDHQY…SMAEQLQGES (144 aa)) is CH1. 3 positions are modified to phosphotyrosine: tyrosine 239, tyrosine 240, and tyrosine 313. The interval 322 to 344 (ARQAGGGAGPPNPSVNGSAPRDL) is disordered. Serine 339 bears the Phosphoserine mark. The SH2 domain occupies 374–465 (WFHGKLSRRE…GSELCLQQPV (92 aa)).

In terms of assembly, interacts with CPNE3; this interaction may mediate the binding of CPNE3 with ERBB2. Interacts with the NPXY motif of tyrosine-phosphorylated IGF1R and INSR in vitro via the PID domain. Once activated, binds to GRB2. Interacts with tyrosine-phosphorylated CD3T and DDR2. Interacts with the N-terminal region of APS. Interacts with phosphorylated LRP1 and IRS4. Interacts with INPP5D/SHIP1 and INPPL1/SHIP2. Interacts with ALK, GAB2, GRB7 and KIT. Interacts with PTPN6/SHP (tyrosine phosphorylated). Identified in a complex containing FGFR4, NCAM1, CDH2, PLCG1, FRS2A, SRC, SHC1, GAP43 and CTTN. Interacts with EPHB1 and GRB2; activates the MAPK/ERK cascade to regulate cell migration. Interacts with PDGFRB (tyrosine-phosphorylated). Interacts with ERBB4. Interacts with TEK/TIE2 (tyrosine-phosphorylated). Interacts with PTK2/FAK1. Interacts with FLT4 (tyrosine-phosphorylated). Interacts with the Trk receptors NTRK1, NTRK2 and NTRK3; in a phosphotyrosine-dependent manner. Interacts with CEACAM1; this interaction is CEACAM1-phosphorylation-dependent and mediates interaction with EGFR or INSR resulting in decrease coupling of SHC1 to the MAPK3/ERK1-MAPK1/ERK2 pathway. Interacts (via PID domain) with PEAK1 (when phosphorylated). Found in a complex with PPP1CA, PPP1CC, SHC1 and PEAK1. Phosphorylated by activated epidermal growth factor receptor. Phosphorylated in response to KIT signaling. Tyrosine phosphorylated in response to FLT3 signaling and by ligand-activated ALK. Tyrosine phosphorylated by TEK/TIE2. Tyrosine phosphorylated by ligand-activated PDGFRB. May be tyrosine phosphorylated by activated PTK2/FAK1. Dephosphorylation by PTPN2 may regulate interaction with GRB2. Phosphorylated in response to FLT4 signaling. Tyrosine phosphorylated by activated PTK2B/PYK2.

Its subcellular location is the cytoplasm. The protein resides in the cell junction. The protein localises to the focal adhesion. Functionally, signaling adapter that couples activated growth factor receptors to signaling pathways. Participates in a signaling cascade initiated by activated KIT and KITLG/SCF. Participates in signaling downstream of the angiopoietin receptor TEK/TIE2, and plays a role in the regulation of endothelial cell migration and sprouting angiogenesis. The polypeptide is SHC-transforming protein 1 (Shc1) (Rattus norvegicus (Rat)).